Reading from the N-terminus, the 96-residue chain is Cystatin (96 aa).

One can recognise a Cystatin domain in the interval 22–65; the sequence is DFIKAALNETGTHAGRKYKVLRSSQQVVAGMKYTFYIVFEDDES. A glycan (N-linked (GlcNAc...) asparagine) is linked at N29.

Belongs to the cystatin family. In terms of assembly, interacts with cathepsin L-like peptidase; the interaction results in inhibition of cathepsin L-like peptidase activity. In terms of tissue distribution, salivary gland. Midgut.

In terms of biological role, cysteine proteinase inhibitor. Inhibits cathepsin L-like peptidase. Increases cell viability following apoptosis induction by staurosporine. Inhibits human cathepsin S (CTSS), human cathepsin L2 (CTSV), human cathepsin L (CTSL), human cathepsin B (CTSB) and papain. Functionally, (Microbial infection) Modulates dengue virus type 2 replication in salivary glands. The polypeptide is Cystatin (Aedes aegypti (Yellowfever mosquito)).